The chain runs to 322 residues: Probable arabinan endo-1,5-alpha-L-arabinosidase A (322 aa).

The first 19 residues, 1 to 19 (MYLPTLAASASLLVGVAHG), serve as a signal peptide directing secretion. Residue D34 is the Proton acceptor of the active site. E201 acts as the Proton donor in catalysis.

Belongs to the glycosyl hydrolase 43 family.

It is found in the secreted. The catalysed reaction is Endohydrolysis of (1-&gt;5)-alpha-arabinofuranosidic linkages in (1-&gt;5)-arabinans.. It participates in glycan metabolism; L-arabinan degradation. Functionally, endo-1,5-alpha-L-arabinanase involved in degradation of pectin. Its preferred substrate is linear 1,5-alpha-L-arabinan. The polypeptide is Probable arabinan endo-1,5-alpha-L-arabinosidase A (abnA) (Emericella nidulans (strain FGSC A4 / ATCC 38163 / CBS 112.46 / NRRL 194 / M139) (Aspergillus nidulans)).